A 317-amino-acid chain; its full sequence is MNQLESLKQFTTIVADSGDIELIRHYTPQDTTTNPSLILKATSLSYYQNMLEDVLAYARKQSGNHNAKMRAASDKLAVNIGLEILKIIPGRISTEIDARFSFNSDMCINHAHKIVSLYQEQGINKSRVLIKLASTWEGIKAAEELEKAGINCNLTLIFSFAQARACAEANVYLISPFVGRIYDWYNQRKLLTEDSYDREDPGVKSVHKIYDYYKQHRYQTIVMGASFRKIDQILALAGCDYLTISPVLLEKLRSSYQHVERQLFPATKFFHKPIPLSESQFRWEHNQDAMAVDQLADGIRKFALDQYNIEKILAKKL.

Lysine 131 (schiff-base intermediate with substrate) is an active-site residue.

Belongs to the transaldolase family. Type 1 subfamily. As to quaternary structure, homodimer.

Its subcellular location is the cytoplasm. The catalysed reaction is D-sedoheptulose 7-phosphate + D-glyceraldehyde 3-phosphate = D-erythrose 4-phosphate + beta-D-fructose 6-phosphate. The protein operates within carbohydrate degradation; pentose phosphate pathway; D-glyceraldehyde 3-phosphate and beta-D-fructose 6-phosphate from D-ribose 5-phosphate and D-xylulose 5-phosphate (non-oxidative stage): step 2/3. Functionally, transaldolase is important for the balance of metabolites in the pentose-phosphate pathway. The sequence is that of Transaldolase from Baumannia cicadellinicola subsp. Homalodisca coagulata.